Here is a 610-residue protein sequence, read N- to C-terminus: MAFTPSSPPSPAADASQRPSRYPGEDTTPTSRREILGWYAYGIAAEVFAVCGVGSFLPLTLEQLARERGVLKSSHLPCVGPDAPTSSLANGTAPALLRRDGADNDQCVVGLLGLEINTASFAMYTFSLAVLVQALTLISFSALADYENNRKTLLLAFGFIGSATSMLFVFVAPPVFTFGAILVIIGVTCLGSSFVVLNSFLPVLVANDPSIQGASKEADEELHTLNENGQFEPRDSFSERNPEFESQYTPGIGLGSKPSTNATSPELQLSTRISSKGVGLGYCAAVLVQILSIGLLFALSKTSLPKVSGTLPLRFVLLLVGIWWFSFTMVTRRWLRNRPGPPLSTTTTGGHTNKWRVWLRLVGFAWKSLWKTVKIAVQLREVRVFLVAWFLLSDAIATVSGTAILFARTELKMSTTLVGCLSITATLSGMTGAFLWPVVSRRFKLKSSHTIMLCIALFEIIPLYGMLAYIPLFKKWGVIGLQQPWEIFPLAIVHGIVSGGLSSYCRSFFGLLIPPGSEAAFYALYAATDKGSSVIGPAIVGMLIDATGQVRSGFFFIAILIVLPIPLVWMVNAEKGRMEGVAMAERMAKGQESETGEPGEEAEGLLARGA.

Residues 1-11 (MAFTPSSPPSP) are compositionally biased toward pro residues. The tract at residues 1–29 (MAFTPSSPPSPAADASQRPSRYPGEDTTP) is disordered. Residues 35 to 55 (ILGWYAYGIAAEVFAVCGVGS) form a helical membrane-spanning segment. An N-linked (GlcNAc...) asparagine glycan is attached at Asn-90. 3 helical membrane passes run 120–140 (SFAM…LISF), 152–171 (TLLL…FVFV), and 189–209 (CLGS…ANDP). Residues 229 to 265 (GQFEPRDSFSERNPEFESQYTPGIGLGSKPSTNATSP) are disordered. Residues 232–243 (EPRDSFSERNPE) are compositionally biased toward basic and acidic residues. Asn-261 is a glycosylation site (N-linked (GlcNAc...) asparagine). 8 consecutive transmembrane segments (helical) span residues 278–298 (VGLG…LLFA), 310–330 (TLPL…FTMV), 384–404 (VFLV…GTAI), 418–438 (VGCL…LWPV), 453–473 (LCIA…IPLF), 488–510 (FPLA…SFFG), 522–544 (YALY…GMLI), and 553–573 (GFFF…MVNA). Positions 588 to 610 (AKGQESETGEPGEEAEGLLARGA) are disordered. Over residues 594–603 (ETGEPGEEAE) the composition is skewed to acidic residues.

This sequence belongs to the ATG22 family.

It localises to the vacuole membrane. In terms of biological role, vacuolar effluxer which mediate the efflux of amino acids resulting from autophagic degradation. The release of autophagic amino acids allows the maintenance of protein synthesis and viability during nitrogen starvation. The protein is Autophagy-related protein 22-1 (atg22-1) of Aspergillus terreus (strain NIH 2624 / FGSC A1156).